A 137-amino-acid chain; its full sequence is Proofreading thioesterase EntH (137 aa).

Glu63 functions as the Nucleophile or proton acceptor in the catalytic mechanism.

It belongs to the thioesterase PaaI family. As to quaternary structure, homotetramer. Dimer of dimers. Interacts specifically with the aryl carrier protein (ArCP) domain of EntB.

It is found in the cytoplasm. The protein operates within siderophore biosynthesis; enterobactin biosynthesis. In terms of biological role, required for optimal enterobactin synthesis. Acts as a proofreading enzyme that prevents EntB misacylation by hydrolyzing the thioester bound existing between EntB and wrongly charged molecules. This is Proofreading thioesterase EntH (entH) from Klebsiella pneumoniae subsp. pneumoniae (strain ATCC 700721 / MGH 78578).